A 592-amino-acid chain; its full sequence is Potassium-transporting ATPase potassium-binding subunit (592 aa).

Transmembrane regions (helical) follow at residues 7–27, 60–80, 132–152, 175–195, 279–299, 310–330, 409–429, 449–469, 513–533, and 556–576; these read ILLG…GTYI, LKYA…VYAL, ALAV…IALI, LHVL…QGVI, LSNF…CFTF, WAVL…AMHF, GLYG…LMIG, IAIL…VMLA, VMLG…VLAI, and LFVT…YVPA.

This sequence belongs to the KdpA family. As to quaternary structure, the system is composed of three essential subunits: KdpA, KdpB and KdpC.

The protein resides in the cell inner membrane. Its function is as follows. Part of the high-affinity ATP-driven potassium transport (or Kdp) system, which catalyzes the hydrolysis of ATP coupled with the electrogenic transport of potassium into the cytoplasm. This subunit binds the periplasmic potassium ions and delivers the ions to the membrane domain of KdpB through an intramembrane tunnel. This is Potassium-transporting ATPase potassium-binding subunit from Dechloromonas aromatica (strain RCB).